We begin with the raw amino-acid sequence, 437 residues long: Adenylosuccinate synthetase (437 aa).

GTP-binding positions include 12–18 (GDEGKGK) and 40–42 (GHT). The active-site Proton acceptor is the aspartate 13. Mg(2+) is bound by residues aspartate 13 and glycine 40. IMP is bound by residues 13 to 16 (DEGK), 38 to 41 (NAGH), threonine 128, arginine 142, glutamine 223, threonine 238, and arginine 302. Histidine 41 (proton donor) is an active-site residue. 298–304 (TTTGRRR) is a binding site for substrate. GTP contacts are provided by residues arginine 304, 330–332 (KLD), and 412–414 (SLG).

This sequence belongs to the adenylosuccinate synthetase family. In terms of assembly, homodimer. Mg(2+) is required as a cofactor.

The protein resides in the cytoplasm. It catalyses the reaction IMP + L-aspartate + GTP = N(6)-(1,2-dicarboxyethyl)-AMP + GDP + phosphate + 2 H(+). Its pathway is purine metabolism; AMP biosynthesis via de novo pathway; AMP from IMP: step 1/2. Plays an important role in the de novo pathway of purine nucleotide biosynthesis. Catalyzes the first committed step in the biosynthesis of AMP from IMP. The polypeptide is Adenylosuccinate synthetase (Prochlorococcus marinus (strain MIT 9313)).